The sequence spans 141 residues: Galactose-6-phosphate isomerase subunit LacA 1 (141 aa).

The protein belongs to the LacAB/RpiB family. Heteromultimeric protein consisting of LacA and LacB.

It catalyses the reaction aldehydo-D-galactose 6-phosphate = keto-D-tagatose 6-phosphate. Its pathway is carbohydrate metabolism; D-galactose 6-phosphate degradation; D-tagatose 6-phosphate from D-galactose 6-phosphate: step 1/1. In Streptococcus pyogenes serotype M18 (strain MGAS8232), this protein is Galactose-6-phosphate isomerase subunit LacA 1.